The chain runs to 495 residues: Leucine aminopeptidase 2 (495 aa).

An N-terminal signal peptide occupies residues 1-21; that stretch reads MKSQLLSLAVAVSTISQGVVG. One can recognise a PA domain in the interval 124 to 218; that stretch reads PPANKIMAEL…EDGKNLASLV (95 aa). N-linked (GlcNAc...) asparagine glycans are attached at residues Asn142 and Asn235. The Zn(2+) site is built by His259 and Asp271. Asn272 is a glycosylation site (N-linked (GlcNAc...) asparagine). Glu303 (proton acceptor) is an active-site residue. Zn(2+)-binding residues include Glu304 and Asp332. A glycan (N-linked (GlcNAc...) asparagine) is linked at Asn352. His430 serves as a coordination point for Zn(2+).

Belongs to the peptidase M28 family. M28A subfamily. Monomer. Requires Zn(2+) as cofactor.

Its subcellular location is the secreted. In terms of biological role, extracellular aminopeptidase that releases a wide variety of amino acids from natural peptides and contributes to pathogenicity. The chain is Leucine aminopeptidase 2 (LAP2) from Trichophyton equinum (Horse ringworm fungus).